Reading from the N-terminus, the 638-residue chain is NBPF family member NBPF6 (638 aa).

Coiled-coil stretches lie at residues 10 to 43 (SERAEMNILEINQELRSQLAESNQQFRDLKEKFL) and 69 to 115 (DSVL…KLRE). The tract at residues 157–285 (HLVHKLSPEN…VPPRHHDKSN (129 aa)) is disordered. Acidic residues predominate over residues 165 to 179 (ENDEDEDEDEDDKDE). Residues 174–261 (EDDKDEEVEK…EEEEALNIPP (88 aa)) form the Olduvai 1 domain. A compositionally biased stretch (basic and acidic residues) spans 192–202 (EVQKTEEKEVP). Positions 214–226 (SNSHNPSNSNQPH) are enriched in low complexity. Basic and acidic residues-rich tracts occupy residues 232–251 (TFKEHEVDSALVVESEHPHD) and 264–273 (QNDHEEEEGK). Olduvai domains lie at 326 to 399 (EKQS…ALVD) and 400 to 503 (KIKK…SQAQ). A disordered region spans residues 563–584 (MKNPPQLEDDALEGSASNTQGR).

The protein belongs to the NBPF family.

The protein localises to the cytoplasm. The protein is NBPF family member NBPF6 of Homo sapiens (Human).